The chain runs to 387 residues: Zinc homeostasis factor 1 (387 aa).

4 helical membrane passes run 10 to 30 (IILLLGIDVTFFFIEIITGYA), 34 to 54 (LALIADSFHMLNDIVSLLVAL), 77 to 97 (EILGALSNGVFLIALCMFIFM), and 113 to 133 (TLMFFVGSLGLLSNFVGIFLF). A compositionally biased stretch (polar residues) spans 195–214 (SYTGNHNGAGTSKPVNNHGS). Positions 195-221 (SYTGNHNGAGTSKPVNNHGSIEQDAPK) are disordered. 2 consecutive transmembrane segments (helical) span residues 234 to 254 (FLHVLGDALGNIGVISAALFI) and 263 to 283 (FLFDPCISILLTFIILFSAIP).

This sequence belongs to the cation diffusion facilitator (CDF) transporter (TC 2.A.4) family. SLC30A subfamily.

The protein localises to the endoplasmic reticulum membrane. Its subcellular location is the nucleus membrane. In terms of biological role, involved in zinc homeostasis, where it plays a role in its accumulation in the endoplasmic reticulum/nucleus. Also has a role in the sequestration of cadmium into the endoplasmic reticulum. The polypeptide is Zinc homeostasis factor 1 (zhf1) (Schizosaccharomyces pombe (strain 972 / ATCC 24843) (Fission yeast)).